A 411-amino-acid polypeptide reads, in one-letter code: MSRYVFTSESVTEGHPDKICDQVSDAVLDALLAQDPSSRVACETVVNTGLCMITGEVTSKAQVDFIHLVRNVIKEIGYSGARAGGFDANSCAVLVALDQQSPDIAQGVNEADDHAGDPLDLVGAGDQGIMFGYACNETPELMPLPISLAHRLSRRLAEVRHNGTLGYLLPDGKTQVSVVYENDKPVSIDTILISTQHTAEVDGISDEQGIRERITEDLWTHVVEPATADLALKPSREATKYLVNPTGKFVVGGPQGDAGLTGRKIIVDTYGGYARHGGGAFSGKDPTKVDRSAAYAARYVAKCLVAAGLAERAEVQLSYAIGVAKPVSILVESFGTSALANDALTALVQEHFDLRPGAIIETFGLRNLPQQRGGCFYQDTAAYGHFGRNDLNAPWEDVTAKSQELKQVAAA.

Residue His-15 coordinates ATP. Asp-17 is a binding site for Mg(2+). Position 43 (Glu-43) interacts with K(+). Positions 56 and 100 each coordinate L-methionine. Residues 100–110 (QSPDIAQGVNE) are flexible loop. Residues 171–173 (DGK), 248–249 (KF), Asp-257, 263–264 (RK), Ala-280, and Lys-284 each bind ATP. Asp-257 is a binding site for L-methionine. L-methionine is bound at residue Lys-288.

This sequence belongs to the AdoMet synthase family. As to quaternary structure, homotetramer; dimer of dimers. The cofactor is Mg(2+). It depends on K(+) as a cofactor.

Its subcellular location is the cytoplasm. It catalyses the reaction L-methionine + ATP + H2O = S-adenosyl-L-methionine + phosphate + diphosphate. Its pathway is amino-acid biosynthesis; S-adenosyl-L-methionine biosynthesis; S-adenosyl-L-methionine from L-methionine: step 1/1. Catalyzes the formation of S-adenosylmethionine (AdoMet) from methionine and ATP. The overall synthetic reaction is composed of two sequential steps, AdoMet formation and the subsequent tripolyphosphate hydrolysis which occurs prior to release of AdoMet from the enzyme. The sequence is that of S-adenosylmethionine synthase from Synechococcus sp. (strain CC9605).